Consider the following 492-residue polypeptide: MRCILLGSGTSTGVPEVGCHCRVCRSEDRHDKRTRTSLLIITDAGKRILIDCSPDFRQQALFAGIDSLDAVLLTHEHFDHVGGLDDLRTICWHRELAVYAEQNVLDSIRDRLHYVFRKNPYPGTPLLKLCEVKPDMPFQVADLTVEPLRIMHGRLPILGYKIGEMAFLTDMKDIAAEEIECLKSCRLLFINGLRYRKEHPSHQTIEQAIDTIGQIGNPESVLIHLSHHAPLHQEHLEILPPHIHSGYDGLEAIIDEKGIRIKDFEPHVSRSEYHYQDCGRIGYESALTLQRKLFHDAVADKLENRKPQNTLLFCEHEPVLTLGKHGHEENLLLSESELKSRDIRLFHIERGGDITYHGPGQITGYPIFDLEQYGIGLRSYIEMLEQCIIDLIAIFGLKGERSAGASGVWLDPDIPGRTRKICAIGVKSSRHITMHGFALNVNTDLDYFKLINPCGFSDRGVTSISRELGREQDFILVKQQLEAVFRRNFGAL.

A unknown region spans residues 1–255 (MRCILLGSGT…GYDGLEAIID (255 aa)). The segment at 256-492 (EKGIRIKDFE…AVFRRNFGAL (237 aa)) is lipB domain. Positions 305–492 (RKPQNTLLFC…AVFRRNFGAL (188 aa)) constitute a BPL/LPL catalytic domain. Substrate-binding positions include 350 to 357 (RGGDITYH), 423 to 425 (AIG), and 436 to 438 (GFA). The active-site Acyl-thioester intermediate is C454.

It in the C-terminal section; belongs to the LipB family.

It is found in the cytoplasm. The enzyme catalyses octanoyl-[ACP] + L-lysyl-[protein] = N(6)-octanoyl-L-lysyl-[protein] + holo-[ACP] + H(+). It participates in protein modification; protein lipoylation via endogenous pathway; protein N(6)-(lipoyl)lysine from octanoyl-[acyl-carrier-protein]: step 1/2. In terms of biological role, catalyzes the transfer of endogenously produced octanoic acid from octanoyl-acyl-carrier-protein onto the lipoyl domains of lipoate-dependent enzymes. Lipoyl-ACP can also act as a substrate although octanoyl-ACP is likely to be the physiological substrate. The polypeptide is Octanoyltransferase (Porphyromonas gingivalis (strain ATCC BAA-308 / W83)).